Consider the following 276-residue polypeptide: 3-methyl-2-oxobutanoate hydroxymethyltransferase (276 aa).

Asp-45 and Asp-84 together coordinate Mg(2+). Residues 45–46, Asp-84, and Lys-114 contribute to the 3-methyl-2-oxobutanoate site; that span reads DS. Glu-116 is a binding site for Mg(2+). Catalysis depends on Glu-183, which acts as the Proton acceptor.

The protein belongs to the PanB family. As to quaternary structure, homodecamer; pentamer of dimers. The cofactor is Mg(2+).

It is found in the cytoplasm. The catalysed reaction is 3-methyl-2-oxobutanoate + (6R)-5,10-methylene-5,6,7,8-tetrahydrofolate + H2O = 2-dehydropantoate + (6S)-5,6,7,8-tetrahydrofolate. It participates in cofactor biosynthesis; (R)-pantothenate biosynthesis; (R)-pantoate from 3-methyl-2-oxobutanoate: step 1/2. Functionally, catalyzes the reversible reaction in which hydroxymethyl group from 5,10-methylenetetrahydrofolate is transferred onto alpha-ketoisovalerate to form ketopantoate. The sequence is that of 3-methyl-2-oxobutanoate hydroxymethyltransferase from Carboxydothermus hydrogenoformans (strain ATCC BAA-161 / DSM 6008 / Z-2901).